Consider the following 363-residue polypeptide: Aminomethyltransferase (363 aa).

It belongs to the GcvT family. In terms of assembly, the glycine cleavage system is composed of four proteins: P, T, L and H.

It catalyses the reaction N(6)-[(R)-S(8)-aminomethyldihydrolipoyl]-L-lysyl-[protein] + (6S)-5,6,7,8-tetrahydrofolate = N(6)-[(R)-dihydrolipoyl]-L-lysyl-[protein] + (6R)-5,10-methylene-5,6,7,8-tetrahydrofolate + NH4(+). The glycine cleavage system catalyzes the degradation of glycine. This chain is Aminomethyltransferase, found in Saccharophagus degradans (strain 2-40 / ATCC 43961 / DSM 17024).